Consider the following 165-residue polypeptide: Interferon gamma (165 aa).

The first 23 residues, 1-23 (MKYTSYILAFQLCIVLGSLGCYC), serve as a signal peptide directing secretion. Gln24 carries the post-translational modification Pyrrolidone carboxylic acid. Residues Asn48 and Asn120 are each glycosylated (N-linked (GlcNAc...) asparagine).

The protein belongs to the type II (or gamma) interferon family. Homodimer. Interacts with IFNGR1 (via extracellular domain); this interaction promotes IFNGR1 dimerization. As to expression, released primarily from activated T lymphocytes.

The protein localises to the secreted. In terms of biological role, type II interferon produced by immune cells such as T-cells and NK cells that plays crucial roles in antimicrobial, antiviral, and antitumor responses by activating effector immune cells and enhancing antigen presentation. Primarily signals through the JAK-STAT pathway after interaction with its receptor IFNGR1 to affect gene regulation. Upon IFNG binding, IFNGR1 intracellular domain opens out to allow association of downstream signaling components JAK2, JAK1 and STAT1, leading to STAT1 activation, nuclear translocation and transcription of IFNG-regulated genes. Many of the induced genes are transcription factors such as IRF1 that are able to further drive regulation of a next wave of transcription. Plays a role in class I antigen presentation pathway by inducing a replacement of catalytic proteasome subunits with immunoproteasome subunits. In turn, increases the quantity, quality, and repertoire of peptides for class I MHC loading. Increases the efficiency of peptide generation also by inducing the expression of activator PA28 that associates with the proteasome and alters its proteolytic cleavage preference. Up-regulates as well MHC II complexes on the cell surface by promoting expression of several key molecules such as cathepsins B/CTSB, H/CTSH, and L/CTSL. Participates in the regulation of hematopoietic stem cells during development and under homeostatic conditions by affecting their development, quiescence, and differentiation. The protein is Interferon gamma (IFNG) of Macaca fascicularis (Crab-eating macaque).